Consider the following 248-residue polypeptide: Agamous-like MADS-box protein AGL1 (248 aa).

The MADS-box domain maps to 18 to 72 (RGKIEIKRIENTTNRQVTFCKRRNGLLKKAYELSVLCDAEVALVIFSTRGRLYEY). Positions 102 to 192 (TQYYQQEASK…RAKIAEGARL (91 aa)) constitute a K-box domain.

In terms of assembly, interacts with AGL15 and AGL16.

It localises to the nucleus. Its function is as follows. Probable transcription factor. Interacts genetically with TT16/AGL32 in a partially antagonistic manner during flower development. Is essential for the coordination of cell divisions in ovule, seed coat development and endosperm formation. The polypeptide is Agamous-like MADS-box protein AGL1 (AGL1) (Arabidopsis thaliana (Mouse-ear cress)).